An 88-amino-acid polypeptide reads, in one-letter code: RNA-binding protein Hfq (88 aa).

The 60-residue stretch at 9 to 68 folds into the Sm domain; sequence DPYLNVLRKERVPVSIYLVNGIKLQGQVESFDQFVVLLKNTVSQMVYKHAISTVVPSRAV.

The protein belongs to the Hfq family. In terms of assembly, homohexamer.

RNA chaperone that binds small regulatory RNA (sRNAs) and mRNAs to facilitate mRNA translational regulation in response to envelope stress, environmental stress and changes in metabolite concentrations. Also binds with high specificity to tRNAs. The chain is RNA-binding protein Hfq from Cellvibrio japonicus (strain Ueda107) (Pseudomonas fluorescens subsp. cellulosa).